Reading from the N-terminus, the 509-residue chain is Bifunctional purine biosynthesis protein PurH (509 aa).

Positions 1 to 145 (MIKRALISVF…KSFKDVVVIS (145 aa)) constitute an MGS-like domain.

The protein belongs to the PurH family.

The catalysed reaction is (6R)-10-formyltetrahydrofolate + 5-amino-1-(5-phospho-beta-D-ribosyl)imidazole-4-carboxamide = 5-formamido-1-(5-phospho-D-ribosyl)imidazole-4-carboxamide + (6S)-5,6,7,8-tetrahydrofolate. The enzyme catalyses IMP + H2O = 5-formamido-1-(5-phospho-D-ribosyl)imidazole-4-carboxamide. It participates in purine metabolism; IMP biosynthesis via de novo pathway; 5-formamido-1-(5-phospho-D-ribosyl)imidazole-4-carboxamide from 5-amino-1-(5-phospho-D-ribosyl)imidazole-4-carboxamide (10-formyl THF route): step 1/1. It functions in the pathway purine metabolism; IMP biosynthesis via de novo pathway; IMP from 5-formamido-1-(5-phospho-D-ribosyl)imidazole-4-carboxamide: step 1/1. This chain is Bifunctional purine biosynthesis protein PurH, found in Brachyspira hyodysenteriae (strain ATCC 49526 / WA1).